Reading from the N-terminus, the 69-residue chain is MKQLIIGLIKLYQYSIGLLIPPSCRFYPTCSNYMREALTKHGLIKGLWLGTRRILRCHPWNPGGYDPIP.

Belongs to the UPF0161 family.

Its subcellular location is the cell inner membrane. In terms of biological role, could be involved in insertion of integral membrane proteins into the membrane. This is Putative membrane protein insertion efficiency factor from Nitrosomonas eutropha (strain DSM 101675 / C91 / Nm57).